Reading from the N-terminus, the 429-residue chain is Protein cereblon (429 aa).

Positions 1-30 (MGNHLPLLPAESEEEDEMEVEDQDSKEAKK) are disordered. The segment covering 11-22 (ESEEEDEMEVED) has biased composition (acidic residues). Position 12 is a phosphoserine (S12). The 239-residue stretch at 68-306 (IPVLPQVMMI…CELDIMNKCT (239 aa)) folds into the Lon N-terminal domain. Positions 305-413 (CTSLCCKQCQ…LTRSALLPTI (109 aa)) constitute a CULT domain. The Zn(2+) site is built by C310 and C313. Residues H365, W367, and W373 each contribute to the (S)-thalidomide site. C378 and C381 together coordinate Zn(2+).

This sequence belongs to the CRBN family. In terms of assembly, component of a DCX (DDB1-CUL4-X-box) protein ligase complex, at least composed of CRBN, CUL4A, DDB1 and RBX1. Interacts directly with DDB1. Interacts with KCNT1. Interacts with ILF2. Interacts with TRAF6 and ECSIT. Ubiquitinated, ubiquitination is mediated by its own DCX protein ligase complex.

Its subcellular location is the cytoplasm. It localises to the nucleus. The protein localises to the membrane. The protein operates within protein modification; protein ubiquitination. Its function is as follows. Substrate recognition component of a DCX (DDB1-CUL4-X-box) E3 protein ligase complex that mediates the ubiquitination and subsequent proteasomal degradation of target proteins, such as MEIS2, ILF2 or GLUL. Normal degradation of key regulatory proteins is required for normal limb outgrowth and expression of the fibroblast growth factor FGF8. Maintains presynaptic glutamate release and consequently cognitive functions, such as memory and learning, by negatively regulating large-conductance calcium-activated potassium (BK) channels in excitatory neurons. Likely to function by regulating the assembly and neuronal surface expression of BK channels via its interaction with KCNT1. May also be involved in regulating anxiety-like behaviors via a BK channel-independent mechanism. Plays a negative role in TLR4 signaling by interacting with TRAF6 and ECSIT, leading to inhibition of ECSIT ubiquitination, an important step of the signaling. The polypeptide is Protein cereblon (CRBN) (Pongo abelii (Sumatran orangutan)).